Consider the following 21-residue polypeptide: Azemiopsin (21 aa).

The segment covering 1–14 (DNWWPKPPHQGPRP) has biased composition (pro residues). The disordered stretch occupies residues 1–21 (DNWWPKPPHQGPRPPRPRPKP). Implicated in receptor binding stretches follow at residues 3-6 (WWPK), 8-11 (PHQG), and 13-14 (RP).

As to quaternary structure, monomer. In terms of tissue distribution, expressed by the venom gland.

The protein resides in the secreted. Its function is as follows. In vitro, reversibly blocks human muscle-type nicotinic acetylcholine receptors (nAChR) alpha-1-beta-1-epsilon-delta/CHRNA1-CHRNB1-CHRNE-CHRND (EC(50)=0.44 uM) and alpha-1-beta-1-gamma-delta/CHRNA1-CHRNB1-CHRNG-CHRND (EC(50)=1.56 uM). Binds to nAChR from T.californica (IC(50)=0.03-0.18 uM), human neuronal nAChR alpha-7/CHRNA7 (IC(50)=22 uM) and acetylcholine-binding proteins (AChBP) from L.stagnalis (IC(50)=63 uM) and A.californica (IC(50)=230 uM). The sequence is that of Azemiopsin from Azemiops feae (Fea's viper).